We begin with the raw amino-acid sequence, 414 residues long: Putative cytochrome P450 126 (414 aa).

Cys-363 is a binding site for heme.

Belongs to the cytochrome P450 family. Heme serves as cofactor.

This chain is Putative cytochrome P450 126 (cyp126), found in Mycobacterium tuberculosis (strain CDC 1551 / Oshkosh).